Reading from the N-terminus, the 399-residue chain is Multi-drug resistance efflux pump PmrA (399 aa).

Transmembrane regions (helical) follow at residues 12–34 (IAWFGNFLTGASISLVVPFMPIF), 49–71 (AGLAISVSAISAALFSPIWGILA), 84–106 (GLAMTITMGGLAFVPNIYWLIFL), 140–162 (LSTGVVAGTLTGPFIGGFIAELF), 167–186 (VFLLVGSFLFLAAILTICFI), 217–239 (LFLTSFVIQFSAQSIGPILALYV), 248–270 (LLFVSGLIVSSMGFSSMMSAGVM), 306–328 (LGLYRFLFGLGTGALIPGVNALL), 340–362 (VFAFNQVFFYLGGVVGPMAGSAV), and 366–388 (FGYHAVFYATSLCVAFSCLFNLI).

This sequence belongs to the major facilitator superfamily. TCR/Tet family.

The protein resides in the cell membrane. In terms of biological role, efflux pump for various substrates. The polypeptide is Multi-drug resistance efflux pump PmrA (pmrA) (Streptococcus pneumoniae serotype 4 (strain ATCC BAA-334 / TIGR4)).